Reading from the N-terminus, the 130-residue chain is Small ribosomal subunit protein uS9 (130 aa).

The protein belongs to the universal ribosomal protein uS9 family.

The protein is Small ribosomal subunit protein uS9 of Buchnera aphidicola subsp. Acyrthosiphon pisum (strain Tuc7).